The primary structure comprises 235 residues: Transmembrane protein 176A (235 aa).

Residue Ser38 is modified to Phosphoserine. Helical transmembrane passes span 55 to 75, 86 to 106, 113 to 133, and 193 to 213; these read VASWVMQIVLGILSAVLGGFF, SGAAIWTGAVAVLAGAAAFIY, YWALLRTLLTLAAFSTAIAAL, and AMLLGVWILLLLASLTPLWLY.

This sequence belongs to the TMEM176 family. Interacts with MCOLN2.

It is found in the membrane. The protein is Transmembrane protein 176A (TMEM176A) of Homo sapiens (Human).